Reading from the N-terminus, the 384-residue chain is 8-amino-7-oxononanoate synthase (384 aa).

Substrate is bound at residue R21. 108-109 provides a ligand contact to pyridoxal 5'-phosphate; the sequence is GF. H133 contributes to the substrate binding site. Residues S179, H207, and T233 each coordinate pyridoxal 5'-phosphate. The residue at position 236 (K236) is an N6-(pyridoxal phosphate)lysine. T352 provides a ligand contact to substrate.

The protein belongs to the class-II pyridoxal-phosphate-dependent aminotransferase family. BioF subfamily. In terms of assembly, homodimer. Pyridoxal 5'-phosphate serves as cofactor.

It carries out the reaction 6-carboxyhexanoyl-[ACP] + L-alanine + H(+) = (8S)-8-amino-7-oxononanoate + holo-[ACP] + CO2. It functions in the pathway cofactor biosynthesis; biotin biosynthesis. In terms of biological role, catalyzes the decarboxylative condensation of pimeloyl-[acyl-carrier protein] and L-alanine to produce 8-amino-7-oxononanoate (AON), [acyl-carrier protein], and carbon dioxide. This is 8-amino-7-oxononanoate synthase from Escherichia coli (strain K12 / DH10B).